We begin with the raw amino-acid sequence, 448 residues long: N-succinylarginine dihydrolase (448 aa).

Substrate-binding positions include A19–S28, N110, and H137–R138. Residue E174 is part of the active site. A substrate-binding site is contributed by R216. The active site involves H252. Substrate is bound by residues D254 and N366. Residue C372 is the Nucleophile of the active site.

It belongs to the succinylarginine dihydrolase family. Homodimer.

It catalyses the reaction N(2)-succinyl-L-arginine + 2 H2O + 2 H(+) = N(2)-succinyl-L-ornithine + 2 NH4(+) + CO2. The protein operates within amino-acid degradation; L-arginine degradation via AST pathway; L-glutamate and succinate from L-arginine: step 2/5. Functionally, catalyzes the hydrolysis of N(2)-succinylarginine into N(2)-succinylornithine, ammonia and CO(2). This is N-succinylarginine dihydrolase from Legionella pneumophila (strain Corby).